A 92-amino-acid polypeptide reads, in one-letter code: Pyrimidine/purine nucleoside phosphorylase (92 aa).

This sequence belongs to the nucleoside phosphorylase PpnP family.

It carries out the reaction a purine D-ribonucleoside + phosphate = a purine nucleobase + alpha-D-ribose 1-phosphate. It catalyses the reaction adenosine + phosphate = alpha-D-ribose 1-phosphate + adenine. The enzyme catalyses cytidine + phosphate = cytosine + alpha-D-ribose 1-phosphate. The catalysed reaction is guanosine + phosphate = alpha-D-ribose 1-phosphate + guanine. It carries out the reaction inosine + phosphate = alpha-D-ribose 1-phosphate + hypoxanthine. It catalyses the reaction thymidine + phosphate = 2-deoxy-alpha-D-ribose 1-phosphate + thymine. The enzyme catalyses uridine + phosphate = alpha-D-ribose 1-phosphate + uracil. The catalysed reaction is xanthosine + phosphate = alpha-D-ribose 1-phosphate + xanthine. In terms of biological role, catalyzes the phosphorolysis of diverse nucleosides, yielding D-ribose 1-phosphate and the respective free bases. Can use uridine, adenosine, guanosine, cytidine, thymidine, inosine and xanthosine as substrates. Also catalyzes the reverse reactions. The polypeptide is Pyrimidine/purine nucleoside phosphorylase (Rhodopirellula baltica (strain DSM 10527 / NCIMB 13988 / SH1)).